The chain runs to 512 residues: NAD(P)H-quinone oxidoreductase chain 4, chloroplastic (512 aa).

Transmembrane regions (helical) follow at residues 4–24, 34–54, 87–107, 111–131, 134–154, 167–187, 208–228, 242–262, 274–294, 308–328, 330–350, 374–396, 417–437, and 462–482; these read VPWL…IPLL, WYAL…FGCY, IGLI…AWPV, PKLF…LFAS, ILLF…LLSM, FILY…TASL, GLEI…LPAF, HYST…YGFI, TVFA…AALV, SSVS…DLGL, GAML…FLAG, MFAM…GFVS, IITL…LSMV, and VFVL…PNFA.

The protein belongs to the complex I subunit 4 family.

It is found in the plastid. The protein resides in the chloroplast thylakoid membrane. It carries out the reaction a plastoquinone + NADH + (n+1) H(+)(in) = a plastoquinol + NAD(+) + n H(+)(out). The catalysed reaction is a plastoquinone + NADPH + (n+1) H(+)(in) = a plastoquinol + NADP(+) + n H(+)(out). The chain is NAD(P)H-quinone oxidoreductase chain 4, chloroplastic from Zygnema circumcarinatum (Green alga).